Here is a 472-residue protein sequence, read N- to C-terminus: GTPase Der (472 aa).

EngA-type G domains follow at residues proline 3–glutamate 166 and isoleucine 176–methionine 349. Residues glycine 9–serine 16, aspartate 56–isoleucine 60, asparagine 118–aspartate 121, glycine 182–serine 189, aspartate 229–valine 233, and asparagine 294–aspartate 297 each bind GTP. The KH-like domain maps to alanine 350–glutamate 434. Positions glycine 433–arginine 472 are disordered. Positions lysine 440–arginine 472 are enriched in basic residues.

The protein belongs to the TRAFAC class TrmE-Era-EngA-EngB-Septin-like GTPase superfamily. EngA (Der) GTPase family. As to quaternary structure, associates with the 50S ribosomal subunit.

Its function is as follows. GTPase that plays an essential role in the late steps of ribosome biogenesis. The protein is GTPase Der of Hahella chejuensis (strain KCTC 2396).